Reading from the N-terminus, the 473-residue chain is ATP synthase subunit beta (473 aa).

158–165 (GGAGVGKT) lines the ATP pocket.

The protein belongs to the ATPase alpha/beta chains family. F-type ATPases have 2 components, CF(1) - the catalytic core - and CF(0) - the membrane proton channel. CF(1) has five subunits: alpha(3), beta(3), gamma(1), delta(1), epsilon(1). CF(0) has three main subunits: a(1), b(2) and c(9-12). The alpha and beta chains form an alternating ring which encloses part of the gamma chain. CF(1) is attached to CF(0) by a central stalk formed by the gamma and epsilon chains, while a peripheral stalk is formed by the delta and b chains.

Its subcellular location is the cell membrane. The enzyme catalyses ATP + H2O + 4 H(+)(in) = ADP + phosphate + 5 H(+)(out). Produces ATP from ADP in the presence of a proton gradient across the membrane. The catalytic sites are hosted primarily by the beta subunits. The protein is ATP synthase subunit beta of Bacillus licheniformis (strain ATCC 14580 / DSM 13 / JCM 2505 / CCUG 7422 / NBRC 12200 / NCIMB 9375 / NCTC 10341 / NRRL NRS-1264 / Gibson 46).